The sequence spans 465 residues: ATP synthase subunit beta (465 aa).

ATP is bound at residue 148–155; that stretch reads GGAGVGKT.

Belongs to the ATPase alpha/beta chains family. F-type ATPases have 2 components, CF(1) - the catalytic core - and CF(0) - the membrane proton channel. CF(1) has five subunits: alpha(3), beta(3), gamma(1), delta(1), epsilon(1). CF(0) has three main subunits: a(1), b(2) and c(9-12). The alpha and beta chains form an alternating ring which encloses part of the gamma chain. CF(1) is attached to CF(0) by a central stalk formed by the gamma and epsilon chains, while a peripheral stalk is formed by the delta and b chains.

It is found in the cell inner membrane. It catalyses the reaction ATP + H2O + 4 H(+)(in) = ADP + phosphate + 5 H(+)(out). Functionally, produces ATP from ADP in the presence of a proton gradient across the membrane. The catalytic sites are hosted primarily by the beta subunits. The polypeptide is ATP synthase subunit beta (Neisseria gonorrhoeae (strain ATCC 700825 / FA 1090)).